A 248-amino-acid polypeptide reads, in one-letter code: Cell division protein ZapD (248 aa).

The protein belongs to the ZapD family. Interacts with FtsZ.

Its subcellular location is the cytoplasm. In terms of biological role, cell division factor that enhances FtsZ-ring assembly. Directly interacts with FtsZ and promotes bundling of FtsZ protofilaments, with a reduction in FtsZ GTPase activity. The sequence is that of Cell division protein ZapD from Aliivibrio fischeri (strain ATCC 700601 / ES114) (Vibrio fischeri).